A 616-amino-acid polypeptide reads, in one-letter code: Dihydroxy-acid dehydratase (616 aa).

Mg(2+) is bound at residue D81. C122 contributes to the [2Fe-2S] cluster binding site. The Mg(2+) site is built by D123 and K124. K124 is subject to N6-carboxylysine. C195 provides a ligand contact to [2Fe-2S] cluster. Residue E491 coordinates Mg(2+). S517 functions as the Proton acceptor in the catalytic mechanism.

The protein belongs to the IlvD/Edd family. In terms of assembly, homodimer. [2Fe-2S] cluster is required as a cofactor. It depends on Mg(2+) as a cofactor.

It catalyses the reaction (2R)-2,3-dihydroxy-3-methylbutanoate = 3-methyl-2-oxobutanoate + H2O. The enzyme catalyses (2R,3R)-2,3-dihydroxy-3-methylpentanoate = (S)-3-methyl-2-oxopentanoate + H2O. Its pathway is amino-acid biosynthesis; L-isoleucine biosynthesis; L-isoleucine from 2-oxobutanoate: step 3/4. It functions in the pathway amino-acid biosynthesis; L-valine biosynthesis; L-valine from pyruvate: step 3/4. Functionally, functions in the biosynthesis of branched-chain amino acids. Catalyzes the dehydration of (2R,3R)-2,3-dihydroxy-3-methylpentanoate (2,3-dihydroxy-3-methylvalerate) into 2-oxo-3-methylpentanoate (2-oxo-3-methylvalerate) and of (2R)-2,3-dihydroxy-3-methylbutanoate (2,3-dihydroxyisovalerate) into 2-oxo-3-methylbutanoate (2-oxoisovalerate), the penultimate precursor to L-isoleucine and L-valine, respectively. This is Dihydroxy-acid dehydratase from Photorhabdus laumondii subsp. laumondii (strain DSM 15139 / CIP 105565 / TT01) (Photorhabdus luminescens subsp. laumondii).